The sequence spans 108 residues: Trp operon repressor homolog (108 aa).

A DNA-binding region spans residues 59-82 (QRQISQLLGVGVATITRGSNELKS).

Belongs to the TrpR family. As to quaternary structure, homodimer.

The protein localises to the cytoplasm. In terms of biological role, this protein is an aporepressor. When complexed with L-tryptophan it binds the operator region of the trp operon and prevents the initiation of transcription. This chain is Trp operon repressor homolog, found in Aliivibrio fischeri (strain MJ11) (Vibrio fischeri).